A 414-amino-acid polypeptide reads, in one-letter code: Na(+)-translocating NADH-quinone reductase subunit B (414 aa).

A run of 4 helical transmembrane segments spans residues 56-76, 82-104, 129-149, and 164-184; these read IMIMVWLAVFPAMFWGMYNVG, ALNHLYSGAELATVISGNWHYWL, FLPIYATVFLVGGFWEVLFCM, and ILFALIVPPTLPLWQAALGIT. Threonine 236 bears the FMN phosphoryl threonine mark. Helical transmembrane passes span 275-295, 297-317, 325-345, 358-378, and 381-401; these read VSTLALAIGAAFIVYMGIASW, IIAGVMVGMIAISTLFNVIGS, MPWHWHLVLGGFAFGMFFMAT, WAYGILIGAMCVMIRVVNPAY, and GMMLAILFANLFAPLFDHIVI.

Belongs to the NqrB/RnfD family. As to quaternary structure, composed of six subunits; NqrA, NqrB, NqrC, NqrD, NqrE and NqrF. It depends on FMN as a cofactor.

The protein localises to the cell inner membrane. The catalysed reaction is a ubiquinone + n Na(+)(in) + NADH + H(+) = a ubiquinol + n Na(+)(out) + NAD(+). NQR complex catalyzes the reduction of ubiquinone-1 to ubiquinol by two successive reactions, coupled with the transport of Na(+) ions from the cytoplasm to the periplasm. NqrA to NqrE are probably involved in the second step, the conversion of ubisemiquinone to ubiquinol. This Vibrio anguillarum (Listonella anguillarum) protein is Na(+)-translocating NADH-quinone reductase subunit B.